The sequence spans 105 residues: ESAT-6-like protein EsxB (105 aa).

Positions 1-23 (MSQGFKTEADVMRNTAHRVDDTN) are disordered. Residues 7-21 (TEADVMRNTAHRVDD) are compositionally biased toward basic and acidic residues.

Belongs to the WXG100 family. CFP-10 subfamily. As to quaternary structure, forms a tight 1:1 complex with EsxB.

The sequence is that of ESAT-6-like protein EsxB from Corynebacterium diphtheriae (strain ATCC 700971 / NCTC 13129 / Biotype gravis).